Here is a 268-residue protein sequence, read N- to C-terminus: Glutamate 5-kinase (268 aa).

Residue K15 coordinates ATP. S55, D142, and N158 together coordinate substrate. 178–179 contributes to the ATP binding site; it reads SD.

It belongs to the glutamate 5-kinase family.

The protein resides in the cytoplasm. It catalyses the reaction L-glutamate + ATP = L-glutamyl 5-phosphate + ADP. It functions in the pathway amino-acid biosynthesis; L-proline biosynthesis; L-glutamate 5-semialdehyde from L-glutamate: step 1/2. Functionally, catalyzes the transfer of a phosphate group to glutamate to form L-glutamate 5-phosphate. This is Glutamate 5-kinase from Oenococcus oeni (strain ATCC BAA-331 / PSU-1).